Here is a 254-residue protein sequence, read N- to C-terminus: Pyridoxine 5'-phosphate synthase (254 aa).

A 3-amino-2-oxopropyl phosphate-binding site is contributed by N8. 10–11 (DH) lines the 1-deoxy-D-xylulose 5-phosphate pocket. Position 19 (R19) interacts with 3-amino-2-oxopropyl phosphate. Residue H44 is the Proton acceptor of the active site. Residues R46 and H51 each coordinate 1-deoxy-D-xylulose 5-phosphate. Catalysis depends on E74, which acts as the Proton acceptor. Residue T104 participates in 1-deoxy-D-xylulose 5-phosphate binding. H198 (proton donor) is an active-site residue. 3-amino-2-oxopropyl phosphate-binding positions include G199 and 220–221 (GH).

This sequence belongs to the PNP synthase family. As to quaternary structure, homooctamer; tetramer of dimers.

It localises to the cytoplasm. It carries out the reaction 3-amino-2-oxopropyl phosphate + 1-deoxy-D-xylulose 5-phosphate = pyridoxine 5'-phosphate + phosphate + 2 H2O + H(+). The protein operates within cofactor biosynthesis; pyridoxine 5'-phosphate biosynthesis; pyridoxine 5'-phosphate from D-erythrose 4-phosphate: step 5/5. Its function is as follows. Catalyzes the complicated ring closure reaction between the two acyclic compounds 1-deoxy-D-xylulose-5-phosphate (DXP) and 3-amino-2-oxopropyl phosphate (1-amino-acetone-3-phosphate or AAP) to form pyridoxine 5'-phosphate (PNP) and inorganic phosphate. This Caulobacter vibrioides (strain ATCC 19089 / CIP 103742 / CB 15) (Caulobacter crescentus) protein is Pyridoxine 5'-phosphate synthase.